We begin with the raw amino-acid sequence, 540 residues long: Chaperonin GroEL 3 (540 aa).

ATP is bound by residues 30–33, lysine 51, 87–91, glycine 415, 479–481, and aspartate 495; these read TLGP, DGTTT, and NAA.

It belongs to the chaperonin (HSP60) family. As to quaternary structure, forms a cylinder of 14 subunits composed of two heptameric rings stacked back-to-back. Interacts with the co-chaperonin GroES.

The protein resides in the cytoplasm. It catalyses the reaction ATP + H2O + a folded polypeptide = ADP + phosphate + an unfolded polypeptide.. In terms of biological role, together with its co-chaperonin GroES, plays an essential role in assisting protein folding. The GroEL-GroES system forms a nano-cage that allows encapsulation of the non-native substrate proteins and provides a physical environment optimized to promote and accelerate protein folding. This Burkholderia cenocepacia (strain HI2424) protein is Chaperonin GroEL 3.